The sequence spans 587 residues: Protein POF1B (587 aa).

Residues 331–529 (STFSNIREEL…EELSKLRQEI (199 aa)) adopt a coiled-coil conformation.

As to quaternary structure, interacts with nonmuscle actin. Expression absent in adult ovary.

The protein resides in the cell junction. The protein localises to the tight junction. Functionally, plays a key role in the organization of epithelial monolayers by regulating the actin cytoskeleton. May be involved in ovary development. The chain is Protein POF1B (Pof1b) from Mus musculus (Mouse).